Reading from the N-terminus, the 437-residue chain is Sodium/bile acid cotransporter 4 (437 aa).

At 1 to 103 the chain is on the extracellular side; the sequence is MDGLDNTTRL…PPFWDTPLNH (103 aa). N-linked (GlcNAc...) asparagine glycans are attached at residues asparagine 6, asparagine 20, and asparagine 26. Residues 16-84 form a disordered region; sequence LLPDNLTLSP…GGVAGQDSST (69 aa). Low complexity predominate over residues 21–50; sequence LTLSPNASSTSASTLSPLPVTSSPSPGLSL. A helical membrane pass occupies residues 104–124; the sequence is GLNVFVGAALCITMLGLGCTV. Topologically, residues 125-140 are cytoplasmic; the sequence is DVNHFGAHVRRPVGAL. The chain crosses the membrane as a helical span at residues 141–161; it reads LAALCQFGFLPLLAFLLALAF. Over 162–197 the chain is Extracellular; that stretch reads KLDEVAAVAVLLCGCCPGGNLSNLMSLLVDGDMNLS. N-linked (GlcNAc...) asparagine glycans are attached at residues asparagine 181 and asparagine 195. Residues 198–218 form a helical membrane-spanning segment; it reads IIMTISSTLLALVLMPLCLWI. Over 219-233 the chain is Cytoplasmic; the sequence is YSRAWINTPLVQLLP. Residues 234-254 traverse the membrane as a helical segment; that stretch reads LGAVTLTLCSTLIPIGLGVFI. At 255 to 267 the chain is on the extracellular side; that stretch reads RYKYNRVADYIVK. A helical transmembrane segment spans residues 268–288; that stretch reads VSLCSLLVTLVVLFIMTGTML. Over 289–291 the chain is Cytoplasmic; sequence GPE. The chain crosses the membrane as a helical span at residues 292 to 312; the sequence is LLASIPAAVYVVAIFMPLAGY. Residues 313–360 are Extracellular-facing; that stretch reads ASGYGLATLFHLPPNCKRTVCLETGSQNVQLCTAILKLAFPPRFIGSM. A helical transmembrane segment spans residues 361–381; that stretch reads YMFPLLYALFQSAEAGVFVLI. Residues 382–437 are Cytoplasmic-facing; sequence YKMYGSEILHKREALDEDDDTDISYKKLKEEELADTSYGTVGTDDLVLMETTQTSL.

The protein belongs to the bile acid:sodium symporter (BASS) (TC 2.A.28) family. In terms of processing, activated following N-terminal proteolytic cleavage by thrombin and/or proteases. As to expression, mainly expressed in the central nervous system cholinergic neurons. Expressed (at protein level) in motor regions of the spinal cord and rhombencephalon, in mesopontine cholinergic neurons, the medial habenula, cholinergic areas of the forebrain, and the gut myenteric plexus.

The protein resides in the cell membrane. Its function is as follows. Transporter for bile acids. This Rattus norvegicus (Rat) protein is Sodium/bile acid cotransporter 4 (Slc10a4).